The primary structure comprises 157 residues: ATP synthase subunit b (157 aa).

A helical membrane pass occupies residues 11–31 (LIMFAMFTWFCMKFIWPPIVM).

The protein belongs to the ATPase B chain family. F-type ATPases have 2 components, F(1) - the catalytic core - and F(0) - the membrane proton channel. F(1) has five subunits: alpha(3), beta(3), gamma(1), delta(1), epsilon(1). F(0) has three main subunits: a(1), b(2) and c(10-14). The alpha and beta chains form an alternating ring which encloses part of the gamma chain. F(1) is attached to F(0) by a central stalk formed by the gamma and epsilon chains, while a peripheral stalk is formed by the delta and b chains.

It localises to the cell inner membrane. Its function is as follows. F(1)F(0) ATP synthase produces ATP from ADP in the presence of a proton or sodium gradient. F-type ATPases consist of two structural domains, F(1) containing the extramembraneous catalytic core and F(0) containing the membrane proton channel, linked together by a central stalk and a peripheral stalk. During catalysis, ATP synthesis in the catalytic domain of F(1) is coupled via a rotary mechanism of the central stalk subunits to proton translocation. Functionally, component of the F(0) channel, it forms part of the peripheral stalk, linking F(1) to F(0). In Vesicomyosocius okutanii subsp. Calyptogena okutanii (strain HA), this protein is ATP synthase subunit b.